The chain runs to 271 residues: Imidazole glycerol phosphate synthase subunit HisF (271 aa).

Residues Asp12 and Asp131 contribute to the active site.

This sequence belongs to the HisA/HisF family. Heterodimer of HisH and HisF.

It localises to the cytoplasm. The enzyme catalyses 5-[(5-phospho-1-deoxy-D-ribulos-1-ylimino)methylamino]-1-(5-phospho-beta-D-ribosyl)imidazole-4-carboxamide + L-glutamine = D-erythro-1-(imidazol-4-yl)glycerol 3-phosphate + 5-amino-1-(5-phospho-beta-D-ribosyl)imidazole-4-carboxamide + L-glutamate + H(+). It functions in the pathway amino-acid biosynthesis; L-histidine biosynthesis; L-histidine from 5-phospho-alpha-D-ribose 1-diphosphate: step 5/9. Functionally, IGPS catalyzes the conversion of PRFAR and glutamine to IGP, AICAR and glutamate. The HisF subunit catalyzes the cyclization activity that produces IGP and AICAR from PRFAR using the ammonia provided by the HisH subunit. This chain is Imidazole glycerol phosphate synthase subunit HisF, found in Methanospirillum hungatei JF-1 (strain ATCC 27890 / DSM 864 / NBRC 100397 / JF-1).